We begin with the raw amino-acid sequence, 7071 residues long: Replicase polyprotein 1ab (7071 aa).

Residues 12-127 (THVQLSLPVL…YRNVLLRKNG (116 aa)) form the CoV Nsp1 globular domain. Residues 148-179 (ELGTDPIEDYEQNWNTKHGSGVLRELTRELNG) enclose the BetaCoV Nsp1 C-terminal domain. Positions 183 to 456 (TRYVDNNFCG…NEDLLEILSR (274 aa)) constitute a CoV Nsp2 N-terminal domain. The Zn(2+) site is built by C200, C231, H234, H236, C323, C326, C341, C344, C370, C373, H382, and C416. Positions 200–236 (CIKDLLARAGKSMCTLSEQLDYIESKRGVYCCRDHGH) are C2H2. The C4 stretch occupies residues 323–344 (CNHCDEVSWQTCDFLKATCEQC). A C2HC region spans residues 370–416 (CPACQDPEIGPEHSAADYHNHSNIETRLRKGGRTRCFGGCVFAYVGC). Residues 458 to 688 (RVNINIVGDF…VDVVNKALEM (231 aa)) enclose the CoV Nsp2 middle domain. The 129-residue stretch at 690–818 (IDQVTIAGAK…TNNVFRLKGG (129 aa)) folds into the CoV Nsp2 C-terminal domain. In terms of domain architecture, Ubiquitin-like 1 spans 822–930 (KGVTFGEDTV…MYCSFYPPDE (109 aa)). Macro domains follow at residues 1001-1167 (VNQL…MDYL), 1205-1333 (KIKA…LPSE), and 1341-1468 (ILGT…TSSS). Residues 1470-1536 (TSEDHFVETV…PLDKLKSLLS (67 aa)) enclose the DPUP domain. The Ubiquitin-like 2 domain occupies 1540-1595 (VKTIKVFTTVDNTNLHTQLVDMSMTYGQQLGPTYLEGADVTKIKPHVNHEGKTFFV). In terms of domain architecture, Peptidase C16 spans 1609-1873 (YYHTLDESFL…YTEIEPKLDG (265 aa)). C1649 serves as the catalytic For PL-PRO activity. C1727, C1730, C1762, and C1764 together coordinate Zn(2+). The C4-type zinc-finger motif lies at 1727-1764 (CKHCGQKTTTLTGVEAVMYMGTLSYDNLKMGVSIPCVC). Catalysis depends on for PL-PRO activity residues H1810 and D1824. A Nucleic acid-binding domain is found at 1886 to 1996 (PIDLIPTQPL…CLWSTKPVDT (111 aa)). One can recognise a G2M domain in the interval 2021–2130 (PTPEEVVENP…LGQAAVTTSN (110 aa)). Residues 2201 to 2221 (LFTIAMWLLLLSICLGSLIYV) traverse the membrane as a helical segment. The tract at residues 2201 to 2369 (LFTIAMWLLL…IFFASFYYIW (169 aa)) is HD1. The region spanning 2222–2292 (TAALGVLLSN…QVTISSYKLD (71 aa)) is the 3Ecto domain. 2 disulfides stabilise this stretch: C2238–C2266 and C2257–C2263. 2 helical membrane passes run 2312 to 2334 (FFYL…SHFI) and 2349 to 2369 (MAPV…YYIW). A Y1 region spans residues 2370–2460 (KSYVHIMDGC…QFKRPINPTD (91 aa)). The CoV Nsp3 Y domain occupies 2370-2738 (KSYVHIMDGC…ITTKISLKGG (369 aa)). 8 residues coordinate Zn(2+): H2374, C2379, C2384, C2387, C2420, H2423, C2427, and C2430. The ZF1 stretch occupies residues 2374–2387 (HIMDGCTSSTCMMC). The tract at residues 2420–2430 (CKTHNWNCLNC) is ZF2. The interval 2461 to 2555 (QSSYVVDSVA…LLDQALVSDV (95 aa)) is Y2. The segment at 2461–2738 (QSSYVVDSVA…ITTKISLKGG (278 aa)) is coV-Y. The Y3 stretch occupies residues 2556-2637 (GDSTEVSVKM…ECLKLSHHSD (82 aa)). The segment at 2638–2738 (LEVTGDSCNN…ITTKISLKGG (101 aa)) is Y4. 6 helical membrane passes run 2753-2773 (LLCV…ILSV), 3020-3040 (ASVV…YYFM), 3059-3079 (LFLM…LPGV), 3081-3101 (SVFY…LAHL), 3103-3123 (WFAM…VFCI), and 3140-3160 (VVFN…TFLL). An HD2 region spans residues 2753-3160 (LLCVLAALVC…EEAALCTFLL (408 aa)). The Nsp4C domain maps to 3140–3238 (VVFNGVTFST…QTSITSAVLQ (99 aa)). The Peptidase C30 domain maps to 3239 to 3544 (SGFRKMAFPS…VRQCSGVTFQ (306 aa)). Residues H3279 and C3383 each act as for 3CL-PRO activity in the active site. 7 helical membrane-spanning segments follow: residues 3562 to 3582 (FLTS…FFVY), 3584 to 3604 (NAFL…MLLV), 3610 to 3630 (FLCL…MVYM), 3657 to 3676 (CVMY…RTVY), 3683 to 3702 (VWTL…GNAL), 3726 to 3746 (IMFL…LLFI), and 3754 to 3774 (IMLV…LFCL). The tract at residues 3562–3774 (FLTSLLILVQ…CCCYFGLFCL (213 aa)) is HD3. Residues 3835 to 3917 (SKMSDVKCTS…EMLDNRATLQ (83 aa)) form the RdRp Nsp7 cofactor domain. The RdRp Nsp8 cofactor domain occupies 3918–4115 (AIASEFSSLP…LRANSAVKLQ (198 aa)). A Nsp9 ssRNA-binding domain is found at 4116-4228 (NNELSPVALR…GSLAATVRLQ (113 aa)). An ExoN/MTase coactivator domain is found at 4229 to 4367 (AGNATEVPAN…CDQLREPMMQ (139 aa)). Zn(2+) contacts are provided by C4302, C4305, H4311, C4318, C4345, C4348, C4356, and C4358. 2 zinc fingers span residues 4302–4318 (CLYC…KGFC) and 4345–4358 (CTVC…GCSC). The NiRAN domain maps to 4374-4628 (FLNRVCGVSA…AAESHMDADL (255 aa)). Mn(2+) contacts are provided by N4576 and D4585. The Nsp12 Interface domain occupies 4633–4731 (IKWDLLKYDF…HNQDVNLHSS (99 aa)). Positions 4662, 4668, 4673, 4677, and 4854 each coordinate Zn(2+). Residues 4732–5299 (RLSFKELLVY…AMYTPHTVLQ (568 aa)) enclose the Nsp12 RNA-dependent RNA polymerase domain. The interval 4734–4948 (SFKELLVYAA…HQKLLKSIAA (215 aa)) is rdRp Fingers N-ter. The tract at residues 4949 to 4987 (TRGATVVIGTSKFYGGWHNMLKTVYSDVETPHLMGWDYP) is rdRp Palm N-ter. Residues 4979 to 5141 (PHLMGWDYPK…CYNSNYAAQG (163 aa)) form the RdRp catalytic domain. The rdRp Fingers C-ter stretch occupies residues 4988-5046 (KCDRAMPNMLRIMASLVLARKHSTCCNLSHRFYRLANECAQVLSEMVMCGGSLYVKPGG). H5009, C5012, and C5013 together coordinate Zn(2+). A rdRp Palm C-ter region spans residues 5047–5182 (TSSGDATTAY…TKGPHEFCSQ (136 aa)). Residues S5126, D5127, and D5128 contribute to the active site. Residues 5183–5299 (HTMLVKQGDD…AMYTPHTVLQ (117 aa)) are rdRp Thumb. Positions 5300–5412 (AVGACVLCNS…TDFNAIATCD (113 aa)) constitute a CV ZBD domain. Zn(2+)-binding residues include C5304, C5307, C5315, C5318, C5325, C5328, H5332, H5338, C5349, C5354, C5371, and H5374. The (+)RNA virus helicase ATP-binding domain occupies 5556–5737 (NISDEFSSNV…MKTIGPDMFL (182 aa)). Residue 5581–5588 (GPPGTGKS) coordinates ATP. The (+)RNA virus helicase C-terminal domain maps to 5738-5907 (GTCRRCPAEI…TLQAENVTGL (170 aa)). An ExoN domain is found at 5972–6187 (MFITREEAIR…RCLAVHECFV (216 aa)). Active-site residues include D5990, E5992, and E6091. 7 residues coordinate Zn(2+): C6107, C6110, C6126, H6129, H6157, C6161, and H6164. Active-site residues include H6168 and D6173. Zn(2+) is bound at residue C6179. The 232-residue stretch at 6196-6427 (YPIIGDELKI…NLWNTFTRLQ (232 aa)) folds into the N7-MTase domain. 6231-6237 (DIGNPKA) is a binding site for S-adenosyl-L-methionine. Positions 6314-6328 (CDGGSLYVNKHAFHT) are gpppA-binding. Zn(2+) is bound by residues C6352, C6373, C6384, and H6387. A Nsp15 N-terminal oligomerization domain is found at 6428 to 6488 (SLENVAYNVV…NVAFELWAKR (61 aa)). In terms of domain architecture, AV-Nsp11N/CoV-Nsp15M spans 6489 to 6614 (NIKSVPEIKI…YFKKVDGIIQ (126 aa)). One can recognise a NendoU domain in the interval 6631-6770 (KPRSQMETDF…KDGHVETFYP (140 aa)). Residues H6661, H6676, K6716, K6819, D6903, K6943, and E6976 contribute to the active site. The region spanning 6775-7069 (SQAWQPGVAM…RVVVSSDILV (295 aa)) is the Nidovirus-type SAM-dependent 2'-O-MTase domain.

It belongs to the coronaviruses polyprotein 1ab family. Interacts with host PHB and PHB2. In terms of assembly, interacts with papain-like protease nsp3 and non-structural protein 6. As to quaternary structure, monomer. Homodimer. Only the homodimer shows catalytic activity. Interacts with nsp8 and nsp12 to form the replication-transcription complex (RTC): nsp12, nsp7, two subunits of nsp8, and up to two subunits of nsp13. In terms of assembly, interacts with nsp7, nsp13 and nsp12 to form the replication-transcription complex (RTC): nsp12, nsp7, two subunits of nsp8, and up to two subunits of nsp13. As to quaternary structure, interacts with nsp12. Interacts with proofreading exoribonuclease nsp14 and 2'-O-methyltransferase nsp16; these interactions enhance nsp14 and nsp16 enzymatic activities. In terms of assembly, interacts with nsp7 and nsp8 to form the replication-transcription complex (RTC): nsp12, nsp7, two subunits of nsp8, and up to two subunits of nsp13. Interacts with nsp9. As to quaternary structure, interacts with nsp8 to form the replication-transcription complex (RTC): nsp12, nsp7, two subunits of nsp8, and up to two subunits of nsp13. The cofactor is Mn(2+). Mg(2+) serves as cofactor. Post-translationally, specific enzymatic cleavages in vivo by its own proteases yield mature proteins. 3CL-PRO and PL-PRO proteinases are autocatalytically processed.

It is found in the host membrane. The protein localises to the host cytoplasm. Its subcellular location is the host perinuclear region. The protein resides in the host endoplasmic reticulum-Golgi intermediate compartment. The enzyme catalyses RNA(n) + a ribonucleoside 5'-triphosphate = RNA(n+1) + diphosphate. It catalyses the reaction ATP + H2O = ADP + phosphate + H(+). It carries out the reaction Thiol-dependent hydrolysis of ester, thioester, amide, peptide and isopeptide bonds formed by the C-terminal Gly of ubiquitin (a 76-residue protein attached to proteins as an intracellular targeting signal).. The catalysed reaction is a 5'-end (N(7)-methyl 5'-triphosphoguanosine)-ribonucleoside in mRNA + S-adenosyl-L-methionine = a 5'-end (N(7)-methyl 5'-triphosphoguanosine)-(2'-O-methyl-ribonucleoside) in mRNA + S-adenosyl-L-homocysteine + H(+). The enzyme catalyses uridylyl-uridylyl-ribonucleotide-RNA = a 3'-end uridylyl-2',3'-cyclophospho-uridine-RNA + a 5'-end dephospho-ribonucleoside-RNA. It catalyses the reaction a 5'-end diphospho-ribonucleoside in mRNA + GTP + H(+) = a 5'-end (5'-triphosphoguanosine)-ribonucleoside in mRNA + diphosphate. It carries out the reaction a 5'-end (5'-triphosphoguanosine)-ribonucleoside in mRNA + S-adenosyl-L-methionine = a 5'-end (N(7)-methyl 5'-triphosphoguanosine)-ribonucleoside in mRNA + S-adenosyl-L-homocysteine. Functionally, the replicase polyprotein of coronaviruses is a multifunctional protein: it contains the activities necessary for the transcription of negative stranded RNA, leader RNA, subgenomic mRNAs and progeny virion RNA as well as proteinases responsible for the cleavage of the polyprotein into functional products. Its function is as follows. Inhibits host translation by interacting with the 40S ribosomal subunit. The nsp1-40S ribosome complex further induces an endonucleolytic cleavage near the 5'UTR of host mRNAs, targeting them for degradation. Viral mRNAs are not susceptible to nsp1-mediated endonucleolytic RNA cleavage thanks to the presence of a 5'-end leader sequence and are therefore protected from degradation. By suppressing host gene expression, nsp1 facilitates efficient viral gene expression in infected cells and evasion from host immune response. May play a role in the modulation of host cell survival signaling pathway by interacting with host PHB and PHB2. Indeed, these two proteins play a role in maintaining the functional integrity of the mitochondria and protecting cells from various stresses. In terms of biological role, responsible for the cleavages located at the N-terminus of the replicase polyprotein. In addition, PL-PRO possesses a deubiquitinating/deISGylating activity and processes both 'Lys-48'- and 'Lys-63'-linked polyubiquitin chains from cellular substrates. Participates together with nsp4 in the assembly of virally-induced cytoplasmic double-membrane vesicles necessary for viral replication. Antagonizes innate immune induction of type I interferon by blocking the phosphorylation, dimerization and subsequent nuclear translocation of host IRF3. Also prevents host NF-kappa-B signaling. Functionally, participates in the assembly of virally-induced cytoplasmic double-membrane vesicles necessary for viral replication. Its function is as follows. Cleaves the C-terminus of replicase polyprotein at 11 sites. Recognizes substrates containing the core sequence [ILMVF]-Q-|-[SGACN]. Also able to bind an ADP-ribose-1''-phosphate (ADRP). Plays a role in the initial induction of autophagosomes from host endoplasmic reticulum. Later, limits the expansion of these phagosomes that are no longer able to deliver viral components to lysosomes. In terms of biological role, forms a hexadecamer with nsp8 (8 subunits of each) that may participate in viral replication by acting as a primase. Alternatively, may synthesize substantially longer products than oligonucleotide primers. Functionally, forms a hexadecamer with nsp7 (8 subunits of each) that may participate in viral replication by acting as a primase. Alternatively, may synthesize substantially longer products than oligonucleotide primers. Its function is as follows. Forms a primer, NSP9-pU, which is utilized by the polymerase for the initiation of RNA chains. Interacts with ribosome signal recognition particle RNA (SRP). Together with NSP8, suppress protein integration into the cell membrane, thereby disrupting host immune defenses. Plays a pivotal role in viral transcription by stimulating both nsp14 3'-5' exoribonuclease and nsp16 2'-O-methyltransferase activities. Therefore plays an essential role in viral mRNAs cap methylation. In terms of biological role, RNA-directed RNA polymerase that catalyzes the transcription of viral genomic and subgenomic RNAs. Acts in complex with nsp7 and nsp8 to transcribe both the minus and positive strands of genomic RNA. The kinase-like NiRAN domain of NSP12 attaches one or more nucleotides to the amino terminus of NSP9, forming a covalent RNA-protein intermediate that serves as transcription/replication primer. Subgenomic RNAs (sgRNAs) are formed by discontinuous transcription: The polymerase has the ability to pause at transcription-regulating sequences (TRS) and jump to the leader TRS, resulting in a major deletion. This creates a series of subgenomic RNAs that are replicated, transcribed and translated. In addition, Nsp12 is a subunit of the viral RNA capping enzyme that catalyzes the RNA guanylyltransferase reaction for genomic and sub-genomic RNAs. Subsequently, the NiRAN domain transfers RNA to GDP, and forms the core cap structure GpppA-RNA. Functionally, multi-functional protein with a zinc-binding domain in N-terminus displaying RNA and DNA duplex-unwinding activities with 5' to 3' polarity. Activity of helicase is dependent on magnesium. Its function is as follows. Plays a role in viral RNA synthesis through two distinct activities. The N7-guanine methyltransferase activity plays a role in the formation of the cap structure GpppA-RNA. The proofreading exoribonuclease reduces the sensitivity of the virus to RNA mutagens during replication. This activity acts on both ssRNA and dsRNA in a 3'-5' direction. Plays a role in viral transcription/replication and prevents the simultaneous activation of host cell dsRNA sensors, such as MDA5/IFIH1, OAS, and PKR. Acts by degrading the 5'-polyuridines generated during replication of the poly(A) region of viral genomic and subgenomic RNAs. Catalyzes a two-step reaction in which a 2'3'-cyclic phosphate (2'3'-cP) is first generated by 2'-O transesterification, which is then hydrolyzed to a 3'-phosphate (3'-P). If not degraded, poly(U) RNA would hybridize with poly(A) RNA tails and activate host dsRNA sensors. In terms of biological role, methyltransferase that mediates mRNA cap 2'-O-ribose methylation to the 5'-cap structure of viral mRNAs. N7-methyl guanosine cap is a prerequisite for binding of nsp16. Therefore plays an essential role in viral mRNAs cap methylation which is essential to evade immune system. The sequence is that of Replicase polyprotein 1ab (rep) from Rhinolophus ferrumequinum (Greater horseshoe bat).